A 412-amino-acid chain; its full sequence is MAQLDPKTINKIVLAYSGGLDTSIIARWLQETYDAEVITFTADIGQGEEVEPARAKAEAMGIKHIHIEDLREEFARDYVFPMFRANAIYEGEYLLGTSIARPLIAKRLVEIAKEHNADAISHGATGKGNDQVRFELGAVALSPDVVTIAPWREWDLSSRESLMEYAKEHNIAIDYAGNKKKSPYSMDANLLHISYEGGILEDPYAEAEDDMWRWSVSPEEAPDEAQYLELEYEKGDIVAIDGEALKPYEVMIKLNEIGGKHGIGRLDIVENRYVGMKSRGCYETPAGTIMLKAHRGIESLTLDREAAHLKDELMPRYAKTIYNGYWFSPERMMLQALIDKSQEYVNGTVRVKLYKGAVSVVGRKSDDSLFDEKIATFEDDAGAYDQKDAEGFIRLNGLRLAIEASRGRDLSK.

ATP contacts are provided by residues 15–23 and A42; that span reads AYSGGLDTS. 2 residues coordinate L-citrulline: Y93 and S98. ATP is bound at residue G123. 3 residues coordinate L-aspartate: T125, N129, and D130. N129 is an L-citrulline binding site. L-citrulline is bound by residues R133, S185, S194, E270, and Y282.

This sequence belongs to the argininosuccinate synthase family. Type 1 subfamily. As to quaternary structure, homotetramer.

It localises to the cytoplasm. It carries out the reaction L-citrulline + L-aspartate + ATP = 2-(N(omega)-L-arginino)succinate + AMP + diphosphate + H(+). Its pathway is amino-acid biosynthesis; L-arginine biosynthesis; L-arginine from L-ornithine and carbamoyl phosphate: step 2/3. In Psychrobacter cryohalolentis (strain ATCC BAA-1226 / DSM 17306 / VKM B-2378 / K5), this protein is Argininosuccinate synthase.